A 392-amino-acid polypeptide reads, in one-letter code: Isocitrate dehydrogenase [NAD] subunit gamma, mitochondrial (392 aa).

The N-terminal 39 residues, 1-39 (MALKVATAAGGAVKAALRPALLWRPWEVLGSHEAPRRSF), are a transit peptide targeting the mitochondrion. Citrate contacts are provided by T119 and N132. Positions 135, 166, and 253 each coordinate substrate. A Mn(2+)-binding site is contributed by D253. Residues N311, T312, and N323 each coordinate ADP.

This sequence belongs to the isocitrate and isopropylmalate dehydrogenases family. As to quaternary structure, heterooligomer of subunits alpha (IDH3A), beta (IDH3B), and gamma (IDH3G) in the apparent ratio of 2:1:1. The heterodimer containing one IDH3A and one IDH3B subunit and the heterodimer containing one IDH3A and one IDH3G subunit assemble into a heterotetramer (which contains two subunits of IDH3A, one of IDH3B and one of IDH3G) and further into the heterooctamer. Mg(2+) is required as a cofactor. Requires Mn(2+) as cofactor.

It localises to the mitochondrion. With respect to regulation, the heterotetramer and the heterodimer composed of IDH3A and IDH3G subunits can be allosterically activated by citrate (CIT) or/and ADP, and the two activators can act independently or synergistically. The heterodimer composed of IDH3A and IDH3B subunits cannot be allosterically regulated and the allosteric regulation of the heterotetramer is through the IDH3G subunit and not the IDH3B subunit. The IDH3G subunit contains the allosteric site which consists of a CIT-binding site and an ADP-binding site, and the binding of CIT and ADP causes conformational changes at the allosteric site which are transmitted to the active site in the catalytic subunit (IDH3A) through a cascade of conformational changes at the heterodimer interface, leading to stabilization of the isocitrate-binding at the active site and thus activation of the enzyme. ATP can activate the heterotetramer and the heterodimer composed of IDH3A and IDH3G subunits at low concentrations but inhibits their activities at high concentrations, whereas ATP exhibits only inhibitory effect on the heterodimer composed of IDH3A and IDH3B subunits. In terms of biological role, regulatory subunit which plays a role in the allosteric regulation of the enzyme catalyzing the decarboxylation of isocitrate (ICT) into alpha-ketoglutarate. The heterodimer composed of the alpha (IDH3A) and beta (IDH3B) subunits and the heterodimer composed of the alpha (IDH3A) and gamma (IDH3G) subunits, have considerable basal activity but the full activity of the heterotetramer (containing two subunits of IDH3A, one of IDH3B and one of IDH3G) requires the assembly and cooperative function of both heterodimers. This is Isocitrate dehydrogenase [NAD] subunit gamma, mitochondrial (IDH3G) from Bos taurus (Bovine).